The sequence spans 105 residues: Heat shock protein HspQ (105 aa).

The segment at Gly75 to Asn105 is disordered.

It belongs to the HspQ family.

It localises to the cytoplasm. Its function is as follows. Involved in the degradation of certain denaturated proteins, including DnaA, during heat shock stress. The protein is Heat shock protein HspQ of Cronobacter sakazakii (strain ATCC BAA-894) (Enterobacter sakazakii).